The sequence spans 861 residues: Glucans biosynthesis glucosyltransferase H (861 aa).

6 helical membrane-spanning segments follow: residues 142–162 (FILL…MKGI), 188–208 (VLPY…FCWV), 516–536 (VFLT…FLVL), 573–593 (LFST…MLIW), 600–620 (FGGV…SVLL), and 683–703 (FLWW…VSVI).

Belongs to the glycosyltransferase 2 family. OpgH subfamily.

The protein resides in the cell inner membrane. Its pathway is glycan metabolism; osmoregulated periplasmic glucan (OPG) biosynthesis. In terms of biological role, involved in the biosynthesis of osmoregulated periplasmic glucans (OPGs). The sequence is that of Glucans biosynthesis glucosyltransferase H from Pseudomonas aeruginosa (strain UCBPP-PA14).